Reading from the N-terminus, the 380-residue chain is Epoxyqueuosine reductase (380 aa).

The Proton donor role is filled by aspartate 139. One can recognise a 4Fe-4S ferredoxin-type 1 domain in the interval 181-213 (IPFEPDDPLLDSCGDCTICVDRCPTSALVGNGQ). Cysteine 193, cysteine 196, cysteine 199, cysteine 203, cysteine 219, cysteine 245, cysteine 248, and cysteine 252 together coordinate [4Fe-4S] cluster. In terms of domain architecture, 4Fe-4S ferredoxin-type 2 spans 234–263 (YRYKIGNRLYGCDTCQQVCPKNRGINTEQD).

Belongs to the QueG family. As to quaternary structure, monomer. Cob(II)alamin is required as a cofactor. [4Fe-4S] cluster serves as cofactor.

Its subcellular location is the cytoplasm. The enzyme catalyses epoxyqueuosine(34) in tRNA + AH2 = queuosine(34) in tRNA + A + H2O. The protein operates within tRNA modification; tRNA-queuosine biosynthesis. Functionally, catalyzes the conversion of epoxyqueuosine (oQ) to queuosine (Q), which is a hypermodified base found in the wobble positions of tRNA(Asp), tRNA(Asn), tRNA(His) and tRNA(Tyr). The protein is Epoxyqueuosine reductase of Staphylococcus aureus (strain NCTC 8325 / PS 47).